Reading from the N-terminus, the 445-residue chain is ATP-dependent protease ATPase subunit HslU (445 aa).

ATP contacts are provided by residues Ile-18, 60–65, Asp-258, Glu-323, and Arg-395; that span reads GVGKTE.

The protein belongs to the ClpX chaperone family. HslU subfamily. In terms of assembly, a double ring-shaped homohexamer of HslV is capped on each side by a ring-shaped HslU homohexamer. The assembly of the HslU/HslV complex is dependent on binding of ATP.

The protein localises to the cytoplasm. ATPase subunit of a proteasome-like degradation complex; this subunit has chaperone activity. The binding of ATP and its subsequent hydrolysis by HslU are essential for unfolding of protein substrates subsequently hydrolyzed by HslV. HslU recognizes the N-terminal part of its protein substrates and unfolds these before they are guided to HslV for hydrolysis. The sequence is that of ATP-dependent protease ATPase subunit HslU from Syntrophotalea carbinolica (strain DSM 2380 / NBRC 103641 / GraBd1) (Pelobacter carbinolicus).